Consider the following 41-residue polypeptide: Large ribosomal subunit protein bL36 (41 aa).

It belongs to the bacterial ribosomal protein bL36 family.

This Zymomonas mobilis subsp. mobilis (strain ATCC 31821 / ZM4 / CP4) protein is Large ribosomal subunit protein bL36.